A 528-amino-acid polypeptide reads, in one-letter code: Protein MGF 505-7R (528 aa).

Belongs to the asfivirus MGF 505 family. As to quaternary structure, interacts with host STING1. Interacts with host JAK1; this interaction leads to JAK1 degradation. Interacts with host JAK2; this interaction leads to JAK2 degradation. Interacts with host RELA; this interaction inhibits NF-kappa-B promoter activity.

The protein resides in the host cytoplasm. In terms of biological role, plays a role in virus cell tropism, and may be required for efficient virus replication in macrophages. Interferes with host NF-kappa-B promoter activity mediated by TLR8. Mechanistically, inhibits the phosphorylation and subsequent nuclear translocation of host NF-kappa-B RELA subunit downstream of TLR8. Promotes the expression of the autophagy-related protein host ULK1 to degrade host STING and inhibit the interferon response. Also inhibits JAK1- and JAK2-mediated signaling and thus negatively regulates the IFN-gamma signaling. The protein is Protein MGF 505-7R of African swine fever virus (isolate Pig/Kenya/KEN-50/1950) (ASFV).